The sequence spans 256 residues: Hydroxyacylglutathione hydrolase (256 aa).

Residues His-57, His-59, Asp-61, His-62, His-115, Asp-134, and His-172 each contribute to the Zn(2+) site.

It belongs to the metallo-beta-lactamase superfamily. Glyoxalase II family. Monomer. The cofactor is Zn(2+).

The enzyme catalyses an S-(2-hydroxyacyl)glutathione + H2O = a 2-hydroxy carboxylate + glutathione + H(+). It participates in secondary metabolite metabolism; methylglyoxal degradation; (R)-lactate from methylglyoxal: step 2/2. Functionally, thiolesterase that catalyzes the hydrolysis of S-D-lactoyl-glutathione to form glutathione and D-lactic acid. This Rhizobium meliloti (strain 1021) (Ensifer meliloti) protein is Hydroxyacylglutathione hydrolase.